Reading from the N-terminus, the 648-residue chain is 60 kDa heat shock protein homolog 1, mitochondrial (648 aa).

The N-terminal 55 residues, 1 to 55, are a transit peptide targeting the mitochondrion; the sequence is MFRSCVPKAITSSRCFARMYSKDVRFGSGVRAMMIRGVDILADAVAVTMGPKGRS.

This sequence belongs to the chaperonin (HSP60) family.

It is found in the mitochondrion matrix. In terms of biological role, prevents misfolding and promotes the refolding and proper assembly of unfolded polypeptides generated under stress conditions. The sequence is that of 60 kDa heat shock protein homolog 1, mitochondrial (Hsp60B) from Drosophila melanogaster (Fruit fly).